Consider the following 1070-residue polypeptide: Error-prone DNA polymerase (1070 aa).

Belongs to the DNA polymerase type-C family. DnaE2 subfamily.

It localises to the cytoplasm. It carries out the reaction DNA(n) + a 2'-deoxyribonucleoside 5'-triphosphate = DNA(n+1) + diphosphate. Its function is as follows. DNA polymerase involved in damage-induced mutagenesis and translesion synthesis (TLS). It is not the major replicative DNA polymerase. The protein is Error-prone DNA polymerase of Aromatoleum aromaticum (strain DSM 19018 / LMG 30748 / EbN1) (Azoarcus sp. (strain EbN1)).